Consider the following 356-residue polypeptide: Naringenin,2-oxoglutarate 3-dioxygenase (356 aa).

A Fe2OG dioxygenase domain is found at 188 to 292 (CVDMDQKVVV…RLSIATFQNP (105 aa)). 3 residues coordinate Fe cation: His215, Asp217, and His273. Arg283 provides a ligand contact to 2-oxoglutarate.

It belongs to the iron/ascorbate-dependent oxidoreductase family. Fe(2+) is required as a cofactor. It depends on L-ascorbate as a cofactor.

The enzyme catalyses a (2S)-flavan-4-one + 2-oxoglutarate + O2 = a (2R,3R)-dihydroflavonol + succinate + CO2. Its pathway is secondary metabolite biosynthesis; flavonoid biosynthesis. Its function is as follows. Catalyzes the 3-beta-hydroxylation of 2S-flavanones to 2R,3R-dihydroflavonols which are intermediates in the biosynthesis of flavonols, anthocyanidins, catechins and proanthocyanidins in plants. This chain is Naringenin,2-oxoglutarate 3-dioxygenase (FHT), found in Callistephus chinensis (China aster).